The primary structure comprises 235 residues: Large ribosomal subunit protein uL1 (235 aa).

The protein belongs to the universal ribosomal protein uL1 family. As to quaternary structure, part of the 50S ribosomal subunit.

Binds directly to 23S rRNA. The L1 stalk is quite mobile in the ribosome, and is involved in E site tRNA release. Its function is as follows. Protein L1 is also a translational repressor protein, it controls the translation of the L11 operon by binding to its mRNA. This Mycobacteroides abscessus (strain ATCC 19977 / DSM 44196 / CCUG 20993 / CIP 104536 / JCM 13569 / NCTC 13031 / TMC 1543 / L948) (Mycobacterium abscessus) protein is Large ribosomal subunit protein uL1.